Here is a 202-residue protein sequence, read N- to C-terminus: Glycerol-3-phosphate acyltransferase (202 aa).

Transmembrane regions (helical) follow at residues 3 to 23, 87 to 107, 118 to 138, 144 to 164, and 167 to 187; these read NLIIYAFIYLLGSIPFGLILA, LLWSVAVLAILGHCFSIYLLF, GAMIVLLPLEVLTAFIVWVVI, ISSLASLAALLAFVVSSFIFN, and LEIHTHAPVFIIAFIIVYKHL.

It belongs to the PlsY family. As to quaternary structure, probably interacts with PlsX.

The protein resides in the cell inner membrane. It catalyses the reaction an acyl phosphate + sn-glycerol 3-phosphate = a 1-acyl-sn-glycero-3-phosphate + phosphate. It functions in the pathway lipid metabolism; phospholipid metabolism. Functionally, catalyzes the transfer of an acyl group from acyl-phosphate (acyl-PO(4)) to glycerol-3-phosphate (G3P) to form lysophosphatidic acid (LPA). This enzyme utilizes acyl-phosphate as fatty acyl donor, but not acyl-CoA or acyl-ACP. The polypeptide is Glycerol-3-phosphate acyltransferase (Campylobacter jejuni subsp. jejuni serotype O:2 (strain ATCC 700819 / NCTC 11168)).